A 612-amino-acid chain; its full sequence is Bile salt-activated lipase (612 aa).

The N-terminal stretch at 1–20 (MGRLEVLFLGLTCCLAAACA) is a signal peptide. A disulfide bridge connects residues C84 and C100. N207 carries an N-linked (GlcNAc...) asparagine glycan. Catalysis depends on S214, which acts as the Acyl-ester intermediate. An intrachain disulfide couples C266 to C277. Catalysis depends on charge relay system residues D340 and H455. The disordered stretch occupies residues 553–612 (VGDHTPPEDDSEAAPVPPTDDSQGGPVPPTDDSQTTPVPPTDNSQAGDSVEAQMPGPIGF). Tandem repeats lie at residues 556-566 (HTPPEDDSEAA), 567-577 (PVPPTDDSQGG), 578-588 (PVPPTDDSQTT), and 589-599 (PVPPTDNSQAG). Residues 556–599 (HTPPEDDSEAAPVPPTDDSQGGPVPPTDDSQTTPVPPTDNSQAG) are 4 X 11 AA tandem repeats, O-glycosylated region. The span at 583–599 (DDSQTTPVPPTDNSQAG) shows a compositional bias: polar residues.

The protein belongs to the type-B carboxylesterase/lipase family. As to quaternary structure, interacts with CLC. As to expression, synthesized primarily in the pancreas and then transported to the intestine.

The protein localises to the secreted. It carries out the reaction a triacylglycerol + H2O = a diacylglycerol + a fatty acid + H(+). The enzyme catalyses 1,2,3-tri-(9Z-octadecenoyl)-glycerol + H2O = di-(9Z)-octadecenoylglycerol + (9Z)-octadecenoate + H(+). The catalysed reaction is 1,2,3-trioctanoylglycerol + H2O = dioctanoylglycerol + octanoate + H(+). It catalyses the reaction a sterol ester + H2O = a sterol + a fatty acid + H(+). It carries out the reaction cholesteryl (9Z-octadecenoate) + H2O = cholesterol + (9Z)-octadecenoate + H(+). The enzyme catalyses an acetyl ester + H2O = an aliphatic alcohol + acetate + H(+). The catalysed reaction is a butanoate ester + H2O = an aliphatic alcohol + butanoate + H(+). It catalyses the reaction 9-hexadecanoyloxy-octadecanoate + H2O = 9-hydroxy-octadecanoate + hexadecanoate + H(+). It carries out the reaction 9-(9Z-octadecenoyloxy)-octadecanoate + H2O = 9-hydroxy-octadecanoate + (9Z)-octadecenoate + H(+). The enzyme catalyses 1-hexadecanoyl-sn-glycero-3-phosphocholine + H2O = sn-glycerol 3-phosphocholine + hexadecanoate + H(+). The catalysed reaction is 12-hexadecanoyloxy-octadecanoate + H2O = 12-hydroxyoctadecanoate + hexadecanoate + H(+). It catalyses the reaction 12-(9Z-octadecenoyloxy)-octadecanoate + H2O = 12-hydroxyoctadecanoate + (9Z)-octadecenoate + H(+). It carries out the reaction 13-(9Z-octadecenoyloxy)-octadecanoate + H2O = 13-hydroxy-octadecanoate + (9Z)-octadecenoate + H(+). The enzyme catalyses 9-(9Z-hexadecenoyloxy)-octadecanoate + H2O = (9Z)-hexadecenoate + 9-hydroxy-octadecanoate + H(+). The catalysed reaction is 12-(9Z-hexadecenoyloxy)-octadecanoate + H2O = 12-hydroxyoctadecanoate + (9Z)-hexadecenoate + H(+). It catalyses the reaction 13-(9Z-hexadecenoyloxy)-octadecanoate + H2O = 13-hydroxy-octadecanoate + (9Z)-hexadecenoate + H(+). It carries out the reaction 12-octadecanoyloxy-octadecanoate + H2O = 12-hydroxyoctadecanoate + octadecanoate + H(+). The enzyme catalyses 13-octadecanoyloxy-octadecanoate + H2O = 13-hydroxy-octadecanoate + octadecanoate + H(+). The catalysed reaction is 5-(9Z-hexadecenoyloxy)-octadecanoate + H2O = 5-hydroxy-octadecanoate + (9Z)-hexadecenoate + H(+). It catalyses the reaction 9-octadecanoyloxy-octadecanoate + H2O = 9-hydroxy-octadecanoate + octadecanoate + H(+). Its activity is regulated as follows. Activated by bile salts such as sodium taurocholate. In terms of biological role, catalyzes the hydrolysis of a wide range of substrates including cholesteryl esters, phospholipids, lysophospholipids, di- and tri-acylglycerols, and fatty acid esters of hydroxy fatty acids (FAHFA). Preferentially hydrolyzes FAHFAs with the ester bond further away from the carboxylate. Unsaturated FAHFAs are hydrolyzed more quickly than saturated FAHFAs. Has an essential role in the complete digestion of dietary lipids and their intestinal absorption, along with the absorption of fat-soluble vitamins. This is Bile salt-activated lipase (Cel) from Rattus norvegicus (Rat).